The following is a 489-amino-acid chain: Putative general negative regulator of transcription C16C9.04c (489 aa).

Residues 18-61 (CPLCMEEIDISDKNFKPCQCGYRVCRFCWHHIKEDLNGRCPACR) form an RING-type zinc finger. Residues 76–109 (AEEWKMDLHRKNERKKREKERKEVELSNRKHLAN) are a coiled coil. One can recognise an RRM domain in the interval 116–198 (NLAYVNGLSP…VSDGRHLRAS (83 aa)). Residues 199 to 226 (YGTTKYCTSYLRNQQCPNPSCMYLHEPG) form a C3H1-type zinc finger. Polar residues-rich tracts occupy residues 246–261 (LSTK…HSPS) and 466–479 (ENQP…NNGN). Disordered stretches follow at residues 246-268 (LSTK…PFKT) and 458-489 (VPEQ…GFQS).

It localises to the nucleus. May negatively regulate the basal and activated transcription of many genes. The polypeptide is Putative general negative regulator of transcription C16C9.04c (Schizosaccharomyces pombe (strain 972 / ATCC 24843) (Fission yeast)).